The sequence spans 317 residues: Glutaminase (317 aa).

Substrate is bound by residues serine 67, asparagine 118, glutamate 162, asparagine 169, tyrosine 193, tyrosine 245, and valine 263.

This sequence belongs to the glutaminase family. Homotetramer.

It carries out the reaction L-glutamine + H2O = L-glutamate + NH4(+). The sequence is that of Glutaminase from Brucella canis (strain ATCC 23365 / NCTC 10854 / RM-666).